A 771-amino-acid polypeptide reads, in one-letter code: MFVIKRNGYKENVMFDKITSRIRKLCYGLNTDHIDPIKIAMKVIQGIYNGVTTVELDTLTAEIAATCTTQHPDYAILAARIAVSNLHKETKKLFSEVMKDLFNYVNPKNGKHSPIISSITMDVVNKYKDKLNSVIIYERDFSYNYFGFKTLEKSYLLKINNKIVERPQHMLMRVAVGIHQWDIDSAIETYNLLSEKWFTHASPTLFNAGTSRHQMSSCFLLNMMDDSIEGIYDTLKRCALISKMAGGIGLSISNIRASGSYISGTNGASNGIIPMLRVYNNTARYIDQGGNKRPGVMTIYLEPWHSDIMAFLDLKKNTGNEEHRTRDLFIALWIPDLFMKRVKDDGEWSLMCPDECPGLDNVWGDEFERLYTLYEREKRYKSIIKARVVWKAIIESQIETGTPFILYKDACNKKSNQQNLGTIKCSNLCTEIIQYADANEVAVCNLASIALNMFVIDGQFDFLKLKDVVKVIVRNLNKIIDINYYPIPEAEISNKRHRPIGIGVQGLADAFILLNYPFDSLEAQDLNKKIFETIYYGALEASCELAEKEGPYDTYVGSYASNGILQYDLWNVVPSDLWNWEPLKDKIRTYGLRNSLLVAPMPTASTAQILGNNESVEPYTSNIYTRRVLSGEFQVVNPHLLRVLTERKLWNDEIKNRIMVDGGSIQNTNLPEDIKRVYKTIWEIPQKTIIKMAADRGAFIDQSQSMNIHIADPSYSKLTSMHFYGWSLGLKTGMYYLRTKPASAPIQFTLDKDKIKPLVVCDSEICTSCSG.

Residues Met1 to Lys92 form the ATP-cone domain. ATP-binding positions include Lys5–Arg6, Glu11–Lys17, Thr53, Asp57, and Lys88. The GDP site is built by Ser202 and Ser217. Residues Asp226 to Ile228, Lys243, and Arg256 contribute to the dTTP site. Asn427 provides a ligand contact to GDP. Asn427 serves as the catalytic Proton acceptor. Cys429 serves as the catalytic Cysteine radical intermediate. GDP contacts are provided by residues Glu431 and Thr603–Thr606. The Proton acceptor role is filled by Glu431.

Belongs to the ribonucleoside diphosphate reductase large chain family. Interacts with RNR2/OPG047 subunit. It depends on Mg(2+) as a cofactor.

It carries out the reaction a 2'-deoxyribonucleoside 5'-diphosphate + [thioredoxin]-disulfide + H2O = a ribonucleoside 5'-diphosphate + [thioredoxin]-dithiol. In terms of biological role, ribonucleoside-diphosphate reductase holoenzyme provides the precursors necessary for viral DNA synthesis. Allows virus growth in non-dividing cells. Catalyzes the biosynthesis of deoxyribonucleotides from the corresponding ribonucleotides. This Homo sapiens (Human) protein is Ribonucleoside-diphosphate reductase large subunit (OPG080).